A 215-amino-acid chain; its full sequence is 5'-deoxynucleotidase YGK1 (215 aa).

In terms of domain architecture, HD spans 58–164; that stretch reads ISDHMYRMGL…VKDIDKYEML (107 aa). The a divalent metal cation site is built by His-61, His-89, Asp-90, Glu-93, Asp-98, Ile-99, and Asp-159.

The protein belongs to the HDDC2 family. Homodimer. Requires Mn(2+) as cofactor. The cofactor is Co(2+). Mg(2+) serves as cofactor.

It catalyses the reaction a 2'-deoxyribonucleoside 5'-phosphate + H2O = a 2'-deoxyribonucleoside + phosphate. Catalyzes the dephosphorylation of the nucleoside 5'-monophosphates deoxyadenosine monophosphate (dAMP), deoxycytidine monophosphate (dCMP), deoxyguanosine monophosphate (dGMP) and deoxythymidine monophosphate (dTMP). The polypeptide is 5'-deoxynucleotidase YGK1 (Saccharomyces cerevisiae (strain ATCC 204508 / S288c) (Baker's yeast)).